A 276-amino-acid polypeptide reads, in one-letter code: Acyl-[acyl-carrier-protein]--UDP-N-acetylglucosamine O-acyltransferase (276 aa).

Belongs to the transferase hexapeptide repeat family. LpxA subfamily. As to quaternary structure, homotrimer.

The protein localises to the cytoplasm. The enzyme catalyses a (3R)-hydroxyacyl-[ACP] + UDP-N-acetyl-alpha-D-glucosamine = a UDP-3-O-[(3R)-3-hydroxyacyl]-N-acetyl-alpha-D-glucosamine + holo-[ACP]. It participates in glycolipid biosynthesis; lipid IV(A) biosynthesis; lipid IV(A) from (3R)-3-hydroxytetradecanoyl-[acyl-carrier-protein] and UDP-N-acetyl-alpha-D-glucosamine: step 1/6. Its function is as follows. Involved in the biosynthesis of lipid A, a phosphorylated glycolipid that anchors the lipopolysaccharide to the outer membrane of the cell. The sequence is that of Acyl-[acyl-carrier-protein]--UDP-N-acetylglucosamine O-acyltransferase from Rippkaea orientalis (strain PCC 8801 / RF-1) (Cyanothece sp. (strain PCC 8801)).